Reading from the N-terminus, the 378-residue chain is Non-functional pseudokinase ZRK6 (378 aa).

The Protein kinase domain occupies 34–378; the sequence is DGKCNPIKNF…SNNRSQMSSI (345 aa). ATP contacts are provided by residues 40–48 and Lys83; that span reads IKNFSYDQI.

This sequence belongs to the protein kinase superfamily. Ser/Thr protein kinase family. ZRK subfamily. As to quaternary structure, interacts with RPP13L4/ZAR1.

The polypeptide is Non-functional pseudokinase ZRK6 (Arabidopsis thaliana (Mouse-ear cress)).